The chain runs to 318 residues: Probable 3-hydroxyisobutyrate dehydrogenase-like 3, mitochondrial (318 aa).

Residues 35–64 (TRIG…TVYA) and Ser-129 contribute to the NAD(+) site. Residue Lys-203 is part of the active site. Residue Lys-271 participates in NAD(+) binding.

Belongs to the HIBADH-related family. 3-hydroxyisobutyrate dehydrogenase subfamily.

It is found in the mitochondrion. The enzyme catalyses 3-hydroxy-2-methylpropanoate + NAD(+) = 2-methyl-3-oxopropanoate + NADH + H(+). It participates in amino-acid degradation; L-valine degradation. This chain is Probable 3-hydroxyisobutyrate dehydrogenase-like 3, mitochondrial, found in Arabidopsis thaliana (Mouse-ear cress).